We begin with the raw amino-acid sequence, 241 residues long: Ribosomal RNA small subunit methyltransferase G (241 aa).

Residues G79, F84, 130-131, and R150 contribute to the S-adenosyl-L-methionine site; that span reads AE.

It belongs to the methyltransferase superfamily. RNA methyltransferase RsmG family.

It is found in the cytoplasm. Functionally, specifically methylates the N7 position of a guanine in 16S rRNA. This Ligilactobacillus salivarius (strain UCC118) (Lactobacillus salivarius) protein is Ribosomal RNA small subunit methyltransferase G.